The following is a 223-amino-acid chain: Urease accessory protein UreG (223 aa).

Residues 1 to 31 are disordered; that stretch reads MAKHSHDHTHDHHDRPRRVRKPGEPLRIGVG. 32–39 is a GTP binding site; the sequence is GPVGSGKT.

The protein belongs to the SIMIBI class G3E GTPase family. UreG subfamily. In terms of assembly, homodimer. UreD, UreF and UreG form a complex that acts as a GTP-hydrolysis-dependent molecular chaperone, activating the urease apoprotein by helping to assemble the nickel containing metallocenter of UreC. The UreE protein probably delivers the nickel.

It is found in the cytoplasm. Functionally, facilitates the functional incorporation of the urease nickel metallocenter. This process requires GTP hydrolysis, probably effectuated by UreG. This chain is Urease accessory protein UreG, found in Mycobacterium marinum (strain ATCC BAA-535 / M).